Reading from the N-terminus, the 510-residue chain is Probable inorganic carbon transporter subunit DabB (510 aa).

Helical transmembrane passes span 9–29 (TLLT…LLFL), 37–57 (FVHI…LALV), 68–88 (WHLD…GLII), 105–122 (YFAL…AWLS), 125–145 (LRFM…LIGL), 158–178 (ISGY…IWLF), 204–224 (TGIN…WPFQ), 226–246 (WLIE…AGLV), 266–286 (QIIL…ISLV), 303–323 (GFML…HLIL), 355–375 (LWMI…WFIT), 382–402 (LVSA…LVVF), 410–430 (IAGL…HNSL), and 446–466 (APAV…CTFV).

The protein belongs to the inorganic carbon transporter (TC 9.A.2) DabB family. As to quaternary structure, forms a complex with DabA.

Its subcellular location is the cell membrane. In terms of biological role, part of an energy-coupled inorganic carbon pump. Expression of both dabA and dabB (DA2) restores growth in ambient air to E.coli deleted of its carbonic anhydrase genes (called CAfree, deletion of 'can' and 'cynT'). This Bacillus anthracis protein is Probable inorganic carbon transporter subunit DabB.